A 458-amino-acid chain; its full sequence is MDYRRDGQNDQHQTEPSHTEQQNTENQKLIGHSEQELLDAPVSYEAGRQETASALEMEKQETAVKKEKKRRAAWLSPILGGIIGGGLMLGIAPYLPSDQNQATETASANKQVQSDNFTTAPITNASNIADMVEDLEPTIVGISNIQTSQNNTFGTGGGSSSESESGTGSGVIFKKDSDKAYIITNNHVVEGANKLTVTLYNGETETAKLVGSDTITDLAVLEISGKNVKKVASFGDSSQLRTGEKVIAIGNPLGQQFSGTVTQGIISGLNRTIDVDTTQGTVEMNVLQTDAAINPGNSGGPLINASGQVIGINSLKVSESGVESLGFAIPSNDVEPIVDQLLQNGKVDRPFLGVQMIDMSQVPETYQENTLGLFGDQLGKGVYVKEVQANSPAEKAGIKSEDVIVKLNGKDVESSADIRQILYKDLKVGDKTTIQVLRKGKTKTLNATLTKQTESSSS.

A compositionally biased stretch (basic and acidic residues) spans 1–18 (MDYRRDGQNDQHQTEPSH). The segment at 1–42 (MDYRRDGQNDQHQTEPSHTEQQNTENQKLIGHSEQELLDAPV) is disordered. Residues 1–71 (MDYRRDGQND…TAVKKEKKRR (71 aa)) lie on the Cytoplasmic side of the membrane. A helical membrane pass occupies residues 72–92 (AAWLSPILGGIIGGGLMLGIA). Residues 93–458 (PYLPSDQNQA…LTKQTESSSS (366 aa)) lie on the Extracellular side of the membrane. Residues 146–170 (QTSQNNTFGTGGGSSSESESGTGSG) are disordered. Active-site charge relay system residues include His187, Asp217, and Ser298. Substrate contacts are provided by residues 296-298 (GNS) and 352-356 (LGVQM). The PDZ domain maps to 356 to 440 (MIDMSQVPET…KTTIQVLRKG (85 aa)).

Belongs to the peptidase S1C family.

The protein resides in the cell membrane. The catalysed reaction is Acts on substrates that are at least partially unfolded. The cleavage site P1 residue is normally between a pair of hydrophobic residues, such as Val-|-Val.. In terms of biological role, degrades abnormal exported proteins and responsible for the propeptide processing of a natural pro-protein and for the maturation of a native protein. It also plays a prominent role in stress (heat shock, ethanol, puromycin and NaCl) resistance during active exponential growth. The chain is Serine protease Do-like HtrB (htrB) from Bacillus subtilis (strain 168).